We begin with the raw amino-acid sequence, 412 residues long: Docking protein 2 (412 aa).

A PH domain is found at 4–114 (GAVKQGFLYL…WVQAICLLAF (111 aa)). Residues 147 to 252 (PHKEFAVTMR…SAQKNAAPAT (106 aa)) enclose the IRS-type PTB domain. The interval 246 to 296 (KNAAPATPQPQPATIPASLPRPDSPYSRPHDSLPPPSPTTPVPAPRPRGQE) is disordered. Tyr-271 is modified (phosphotyrosine). Over residues 277-291 (SLPPPSPTTPVPAPR) the composition is skewed to pro residues. Tyr-299 and Tyr-345 each carry phosphotyrosine. The tract at residues 359–412 (SPQEPRGEAWRRQATADRDPAGLQHVQPAGQDFSASGWQPGTEYDNVVLKKGPK) is disordered. A compositionally biased stretch (basic and acidic residues) spans 361–378 (QEPRGEAWRRQATADRDP).

The protein belongs to the DOK family. Type A subfamily. As to quaternary structure, interacts with phosphorylated RASGAP and EGFR. Interacts with RET and NCK. Interacts (via PH domain) with TEK/TIE2 (tyrosine phosphorylated). (Microbial infection) Interacts with Herpes simplex virus 1 (HHV-1) protein UL46; this interaction induces DOK2 phosphorylation and subsequent degradation. Post-translationally, on immunoreceptor stimulation, phosphorylated on C-terminal tyrosine residues. Phosphorylation on Tyr-345 is required for binding to the SH2 domain of NCK. Phosphorylation on both Tyr-271 and Tyr-299 is required for interaction with RASGAP. Phosphorylated on tyrosine residues by TEK/TIE2. In terms of tissue distribution, highly expressed in peripheral blood leukocytes, lymph nodes and spleen. Lower expression in thymus, bone marrow and fetal liver.

In terms of biological role, DOK proteins are enzymatically inert adaptor or scaffolding proteins. They provide a docking platform for the assembly of multimolecular signaling complexes. DOK2 may modulate the cellular proliferation induced by IL-4, as well as IL-2 and IL-3. May be involved in modulating Bcr-Abl signaling. Attenuates EGF-stimulated MAP kinase activation. The protein is Docking protein 2 (DOK2) of Homo sapiens (Human).